The primary structure comprises 360 residues: Mannose-1-phosphate guanyltransferase beta-B (360 aa).

Belongs to the transferase hexapeptide repeat family.

It catalyses the reaction alpha-D-mannose 1-phosphate + GTP + H(+) = GDP-alpha-D-mannose + diphosphate. It participates in nucleotide-sugar biosynthesis; GDP-alpha-D-mannose biosynthesis; GDP-alpha-D-mannose from alpha-D-mannose 1-phosphate (GTP route): step 1/1. Catalyzes the formation of GDP-mannose, an essential precursor of glycan moieties of glycoproteins and glycolipids. The polypeptide is Mannose-1-phosphate guanyltransferase beta-B (gmppb-b) (Xenopus laevis (African clawed frog)).